Here is a 761-residue protein sequence, read N- to C-terminus: BMP/retinoic acid-inducible neural-specific protein 1 (761 aa).

The first 22 residues, 1-22 (MNWRLVEFLYLLFIWDHILVQP), serve as a signal peptide directing secretion. The MACPF domain maps to 68–251 (RYKIYREFAR…FVQSALSYIM (184 aa)). N-linked (GlcNAc...) asparagine glycosylation is found at Asn-156, Asn-433, Asn-443, Asn-553, Asn-599, Asn-631, and Asn-677.

It belongs to the BRINP family.

It localises to the cytoplasm. In terms of biological role, plays a role in neurogenesis and brain development. May suppress cell cycle progression in postmitotic neurons by inhibiting G1/S transition. The polypeptide is BMP/retinoic acid-inducible neural-specific protein 1 (BRINP1) (Gallus gallus (Chicken)).